The chain runs to 183 residues: Dual-action ribosomal maturation protein DarP (183 aa).

It belongs to the DarP family.

Its subcellular location is the cytoplasm. Its function is as follows. Member of a network of 50S ribosomal subunit biogenesis factors which assembles along the 30S-50S interface, preventing incorrect 23S rRNA structures from forming. Promotes peptidyl transferase center (PTC) maturation. The chain is Dual-action ribosomal maturation protein DarP from Citrobacter koseri (strain ATCC BAA-895 / CDC 4225-83 / SGSC4696).